We begin with the raw amino-acid sequence, 493 residues long: Amphoterin-induced protein 1 (493 aa).

The N-terminal stretch at 1-27 (MHPHRDPRGLWLLLPSLSLLLFEVARA) is a signal peptide. The 34-residue stretch at 28-61 (GRAVVSCPAACLCASNILSCSKQQLPNVPHSLPS) folds into the LRRNT domain. The Extracellular segment spans residues 28-372 (GRAVVSCPAA…LHGHHDTLNT (345 aa)). 2 cysteine pairs are disulfide-bonded: cysteine 34–cysteine 40 and cysteine 38–cysteine 47. LRR repeat units follow at residues 62 to 83 (YTAL…WTPT), 87 to 108 (QLHS…AFSP), 111 to 132 (NLRY…LFSD), 135 to 156 (VLEV…AFDD), 159 to 179 (QLQK…ELVK), and 186 to 206 (KLTL…PDLQ). A glycan (N-linked (GlcNAc...) asparagine) is linked at asparagine 72. In terms of domain architecture, LRRCT spans 221–272 (NPLNCDCELYQLFSHWQYRQLSSVMDFQEDLYCMNSKKLHNVFNLSFLNCGE). Disulfide bonds link cysteine 225–cysteine 253, cysteine 227–cysteine 270, and cysteine 290–cysteine 341. N-linked (GlcNAc...) asparagine glycosylation is found at asparagine 264, asparagine 315, asparagine 349, and asparagine 360. Positions 269 to 353 (NCGEYKERAW…MGETFNETLS (85 aa)) constitute an Ig-like C2-type domain. Residues 373 to 393 (AYTTLVGCILSVVLVLIYLYL) form a helical membrane-spanning segment. Residues 394-493 (TPCRCWCRGV…SVFSDTPIVV (100 aa)) are Cytoplasmic-facing. Positions 405 to 493 (KPSSHQGDSL…SVFSDTPIVV (89 aa)) are disordered. The segment covering 408-424 (SHQGDSLSSSMLSTTPN) has biased composition (polar residues). A compositionally biased stretch (basic and acidic residues) spans 431-442 (GDKDDGFDRRVA). Residues serine 477 and serine 481 each carry the phosphoserine modification.

It belongs to the immunoglobulin superfamily. AMIGO family. Homodimer, and heterodimer with AMIGO2 and AMIGO3. Interacts with KCNB1.

It is found in the cell membrane. It localises to the perikaryon. The protein localises to the cell projection. The protein resides in the dendrite. Its subcellular location is the axon. Promotes growth and fasciculation of neurites from cultured hippocampal neurons. May be involved in fasciculation as well as myelination of developing neural axons. May have a role in regeneration as well as neural plasticity in the adult nervous system. May mediate homophilic as well as heterophilic cell-cell interaction and contribute to signal transduction through its intracellular domain. Assembled with KCNB1 modulates the gating characteristics of the delayed rectifier voltage-dependent potassium channel KCNB1. The chain is Amphoterin-induced protein 1 from Homo sapiens (Human).